The following is a 423-amino-acid chain: Transcription factor bHLH14 (423 aa).

Positions 192-243 (GKTTKHTNQTGSYPKPAVSDHSKSGNQQFGSERKRRRKLETTRVAAATKEKH) are disordered. The bHLH domain occupies 245–294 (PAVLSHVEAEKQRREKLNHRFYALRAIVPKVSRMDKASLLSDAVSYIESL). The interval 312 to 343 (ETDKLDNSSSNTSPSSVEYQVNQKPSKSNRGS) is disordered. The segment covering 318-327 (NSSSNTSPSS) has biased composition (low complexity). A compositionally biased stretch (polar residues) spans 328–342 (VEYQVNQKPSKSNRG).

Homodimer.

The protein localises to the nucleus. The polypeptide is Transcription factor bHLH14 (BHLH14) (Arabidopsis thaliana (Mouse-ear cress)).